The sequence spans 676 residues: E3 ubiquitin-protein ligase ICP0 (676 aa).

The RING-type zinc finger occupies 13-52 (CCICLDAITGAARALPCLHAFCLACIRRWLEGRPTCPLCK). 3 disordered regions span residues 101–153 (DLTA…GGRA), 266–517 (HLIP…AGAQ), and 555–676 (AAIS…AWRQ). The segment covering 123-153 (EAGGGAGGAEEAGEARGAGAGRAAGAAGGRA) has biased composition (gly residues). Residues 286–303 (SDSDSEGSEDDSWSESEE) are compositionally biased toward acidic residues. Positions 304–314 (SSSGLSTSDLT) are enriched in low complexity. Residues 315 to 328 (AIDDTETEPETDAE) are compositionally biased toward acidic residues. The span at 351–361 (YVSTRGRQTPA) shows a compositional bias: polar residues. Low complexity-rich tracts occupy residues 375-388 (GRAA…SSRS) and 397-411 (LPAA…QARA). The span at 422-439 (GAGLGVAAGETAGWGAGS) shows a compositional bias: gly residues. A compositionally biased stretch (basic and acidic residues) spans 440–450 (EEGRGERRARL). Positions 474 to 484 (TPAPAPAPAPA) are enriched in pro residues. Residues 555–597 (AAISTRAPTPSPAGRAPAADPRRAGAPALAGAARAEVGRNGNP) are compositionally biased toward low complexity.

This sequence belongs to the simplexviruses ICp0 family. Post-translationally, auto-ubiquitinated. In terms of processing, transactivation activity is possibly regulated through phosphorylation by casein kinase II.

The enzyme catalyses S-ubiquitinyl-[E2 ubiquitin-conjugating enzyme]-L-cysteine + [acceptor protein]-L-lysine = [E2 ubiquitin-conjugating enzyme]-L-cysteine + N(6)-ubiquitinyl-[acceptor protein]-L-lysine.. Functionally, evades nuclear antiviral defenses triggered by dsDNA viruses. Acts during the initial stages of lytic infection and the reactivation of latent viral genome. Prevents the antiviral effect of nuclear bodies by degrading host PML and SP100. The protein is E3 ubiquitin-protein ligase ICP0 (BICP0) of Bovine herpesvirus 1.1 (strain Cooper) (BoHV-1).